We begin with the raw amino-acid sequence, 1183 residues long: Phospholipid-transporting ATPase FetA (1183 aa).

3 helical membrane-spanning segments follow: residues I96–G116, V299–H319, and A348–V368. The active-site 4-aspartylphosphate intermediate is D416. D416, K417, T418, E519, F560, K583, R617, T697, G698, D699, R812, and K818 together coordinate ATP. Residue D416 participates in Mg(2+) binding. Residue T418 coordinates Mg(2+). Mg(2+) is bound at residue D838. Positions 841 and 842 each coordinate ATP. Residue D842 coordinates Mg(2+). A run of 6 helical transmembrane segments spans residues F904–V924, I927–L947, C981–F1001, F1014–A1034, W1049–L1069, and I1090–F1110.

The protein belongs to the cation transport ATPase (P-type) (TC 3.A.3) family. Type IV subfamily. Mg(2+) serves as cofactor. As to expression, highly expressed in testis.

The protein resides in the cytoplasmic vesicle. It localises to the secretory vesicle. The protein localises to the acrosome membrane. It catalyses the reaction ATP + H2O + phospholipidSide 1 = ADP + phosphate + phospholipidSide 2.. Its function is as follows. P4-ATPase flippase which catalyzes the hydrolysis of ATP coupled to the transport of aminophospholipids from the outer to the inner leaflet of various membranes and ensures the maintenance of asymmetric distribution of phospholipids. Phospholipid translocation also seems to be implicated in vesicle formation and in uptake of lipid signaling molecules. May play a role in phospholid transport across membranes and in acrosome formation. This chain is Phospholipid-transporting ATPase FetA (Atp8b5), found in Mus musculus (Mouse).